Consider the following 429-residue polypeptide: Probable M18 family aminopeptidase 2 (429 aa).

Zn(2+) is bound by residues histidine 82, histidine 156, and histidine 401.

The protein belongs to the peptidase M18 family. It depends on Zn(2+) as a cofactor.

This Pseudomonas paraeruginosa (strain DSM 24068 / PA7) (Pseudomonas aeruginosa (strain PA7)) protein is Probable M18 family aminopeptidase 2.